Here is a 753-residue protein sequence, read N- to C-terminus: Neuroendocrine convertase 1 (753 aa).

The first 27 residues, 1 to 27 (MGRRAWTLQCTAFSLFCAWCAMNSVKA), serve as a signal peptide directing secretion. A propeptide spanning residues 28–110 (KKQFVNEWAA…QQYEKERSKR (83 aa)) is cleaved from the precursor. The Peptidase S8 domain maps to 129–450 (QWYLQDTRMT…FGLLNAKALV (322 aa)). The active-site Charge relay system is the aspartate 167. Asparagine 173 is a glycosylation site (N-linked (GlcNAc...) asparagine). The active-site Charge relay system is the histidine 208. Disulfide bonds link cysteine 225/cysteine 374 and cysteine 317/cysteine 347. Serine 382 (charge relay system) is an active-site residue. An N-linked (GlcNAc...) asparagine glycan is attached at asparagine 401. A P/Homo B domain is found at 460 to 597 (SVPEKKECVV…KLILHGTSSQ (138 aa)). The cysteines at positions 467 and 494 are disulfide-linked. 2 disordered regions span residues 617 to 657 (RRGV…RRDE) and 676 to 695 (SKNS…KPNI).

Belongs to the peptidase S8 family. Furin subfamily. Requires Ca(2+) as cofactor.

It localises to the cytoplasmic vesicle. The protein localises to the secretory vesicle. It carries out the reaction Release of protein hormones, neuropeptides and renin from their precursors, generally by hydrolysis of -Lys-Arg-|- bonds.. Its function is as follows. Involved in the processing of hormone and other protein precursors at sites comprised of pairs of basic amino acid residues. Substrates include POMC, renin, enkephalin, dynorphin, somatostatin, insulin and AGRP. This chain is Neuroendocrine convertase 1 (PCSK1), found in Bos taurus (Bovine).